A 1097-amino-acid polypeptide reads, in one-letter code: DNA polymerase catalytic subunit (1097 aa).

Positions Arg-1069–Thr-1097 are disordered. Over residues Asp-1078–Thr-1097 the composition is skewed to basic and acidic residues.

Belongs to the DNA polymerase type-B family.

The protein localises to the host nucleus. The catalysed reaction is DNA(n) + a 2'-deoxyribonucleoside 5'-triphosphate = DNA(n+1) + diphosphate. The polypeptide is DNA polymerase catalytic subunit (UL54) (Murid herpesvirus 1 (strain Smith) (MuHV-1)).